The chain runs to 303 residues: Zinc transporter ZIP9-A (303 aa).

The helical transmembrane segment at 7-27 (ISLLSLAMLVGCYVSGIIPLA) threads the bilayer. N-linked (GlcNAc...) asparagine glycosylation is present at asparagine 29. Transmembrane regions (helical) follow at residues 35-55 (LKLV…AVII), 102-122 (AYIG…DQIG), 142-162 (ITTT…LGAA), 172-192 (LIVF…LVSF), and 206-226 (HLLV…LGLS). The N-linked (GlcNAc...) asparagine glycan is linked to asparagine 237. The next 2 membrane-spanning stretches (helical) occupy residues 240–260 (GVAM…HVLP) and 282–302 (LEVC…IGHQ).

Belongs to the ZIP transporter (TC 2.A.5) family.

The protein resides in the golgi apparatus. Its subcellular location is the trans-Golgi network membrane. It localises to the cell membrane. The protein localises to the cytoplasm. It is found in the perinuclear region. The protein resides in the mitochondrion. Its subcellular location is the nucleus. The enzyme catalyses Zn(2+)(in) = Zn(2+)(out). Functionally, transports zinc ions across cell and organelle membranes into the cytoplasm and regulates intracellular zinc homeostasis. Participates in the zinc ions efflux out of the secretory compartments. Regulates intracellular zinc level, resulting in the enhancement of AKT1 and MAPK3/MAPK1 (Erk1/2) phosphorylation in response to the BCR activation. Also functions as a membrane androgen receptor that mediates, through a G protein, the non-classical androgen signaling pathway, characterized by the activation of MAPK3/MAPK1 (Erk1/2) and transcription factors CREB1 or ATF1. Moreover, has dual functions as a membrane-bound androgen receptor and as an androgen-dependent zinc transporter both of which are mediated through an inhibitory G protein (Gi) that mediates both MAP kinase and zinc signaling leading to the androgen-dependent apoptotic process. This is Zinc transporter ZIP9-A (slc39a9-a) from Xenopus laevis (African clawed frog).